Consider the following 157-residue polypeptide: Stalk-specific protein A (157 aa).

Positions 1–19 (MRSILILLSLLLTIAFASA) are cleaved as a signal peptide.

It is found in the secreted. In Dictyostelium discoideum (Social amoeba), this protein is Stalk-specific protein A (staA).